A 453-amino-acid polypeptide reads, in one-letter code: Cytochrome b-c1 complex subunit 2, mitochondrial (453 aa).

Residues 1-14 (MKLLTRAGSFSRFY) constitute a mitochondrion transit peptide. Lysine 66, lysine 199, and lysine 250 each carry N6-acetyllysine.

This sequence belongs to the peptidase M16 family. UQCRC2/QCR2 subfamily. Component of the ubiquinol-cytochrome c oxidoreductase (cytochrome b-c1 complex, complex III, CIII), a multisubunit enzyme composed of 11 subunits. The complex is composed of 3 respiratory subunits cytochrome b, cytochrome c1 and Rieske protein UQCRFS1, 2 core protein subunits UQCRC1/QCR1 and UQCRC2/QCR2, and 6 low-molecular weight protein subunits UQCRH/QCR6, UQCRB/QCR7, UQCRQ/QCR8, UQCR10/QCR9, UQCR11/QCR10 and subunit 9, the cleavage product of Rieske protein UQCRFS1. The complex exists as an obligatory dimer and forms supercomplexes (SCs) in the inner mitochondrial membrane with NADH-ubiquinone oxidoreductase (complex I, CI) and cytochrome c oxidase (complex IV, CIV), resulting in different assemblies (supercomplex SCI(1)III(2)IV(1) and megacomplex MCI(2)III(2)IV(2)). Interacts with RAB5IF. Interacts with STMP1.

It localises to the mitochondrion inner membrane. Its function is as follows. Component of the ubiquinol-cytochrome c oxidoreductase, a multisubunit transmembrane complex that is part of the mitochondrial electron transport chain which drives oxidative phosphorylation. The respiratory chain contains 3 multisubunit complexes succinate dehydrogenase (complex II, CII), ubiquinol-cytochrome c oxidoreductase (cytochrome b-c1 complex, complex III, CIII) and cytochrome c oxidase (complex IV, CIV), that cooperate to transfer electrons derived from NADH and succinate to molecular oxygen, creating an electrochemical gradient over the inner membrane that drives transmembrane transport and the ATP synthase. The cytochrome b-c1 complex catalyzes electron transfer from ubiquinol to cytochrome c, linking this redox reaction to translocation of protons across the mitochondrial inner membrane, with protons being carried across the membrane as hydrogens on the quinol. In the process called Q cycle, 2 protons are consumed from the matrix, 4 protons are released into the intermembrane space and 2 electrons are passed to cytochrome c. The 2 core subunits UQCRC1/QCR1 and UQCRC2/QCR2 are homologous to the 2 mitochondrial-processing peptidase (MPP) subunits beta-MPP and alpha-MPP respectively, and they seem to have preserved their MPP processing properties. May be involved in the in situ processing of UQCRFS1 into the mature Rieske protein and its mitochondrial targeting sequence (MTS)/subunit 9 when incorporated into complex III. The chain is Cytochrome b-c1 complex subunit 2, mitochondrial (UQCRC2) from Homo sapiens (Human).